Here is a 473-residue protein sequence, read N- to C-terminus: Photosystem II CP43 reaction center protein (473 aa).

A propeptide spanning residues 1 to 14 (MKTLYSLRRFYPVE) is cleaved from the precursor. Residue Thr-15 is modified to N-acetylthreonine. Thr-15 is subject to Phosphothreonine. 5 helical membrane-spanning segments follow: residues 69-93 (LFEV…PHLA), 134-155 (LLGP…KDRN), 178-200 (KALY…RKIT), 255-275 (KPFA…LSYS), and 291-312 (WFNN…ASQA). [CaMn4O5] cluster is bound at residue Glu-367. A helical transmembrane segment spans residues 447–471 (RARAAAAGFEKGIDRDLEPVLSMTP).

The protein belongs to the PsbB/PsbC family. PsbC subfamily. PSII is composed of 1 copy each of membrane proteins PsbA, PsbB, PsbC, PsbD, PsbE, PsbF, PsbH, PsbI, PsbJ, PsbK, PsbL, PsbM, PsbT, PsbX, PsbY, PsbZ, Psb30/Ycf12, at least 3 peripheral proteins of the oxygen-evolving complex and a large number of cofactors. It forms dimeric complexes. It depends on Binds multiple chlorophylls and provides some of the ligands for the Ca-4Mn-5O cluster of the oxygen-evolving complex. It may also provide a ligand for a Cl- that is required for oxygen evolution. PSII binds additional chlorophylls, carotenoids and specific lipids. as a cofactor.

Its subcellular location is the plastid. The protein resides in the chloroplast thylakoid membrane. Its function is as follows. One of the components of the core complex of photosystem II (PSII). It binds chlorophyll and helps catalyze the primary light-induced photochemical processes of PSII. PSII is a light-driven water:plastoquinone oxidoreductase, using light energy to abstract electrons from H(2)O, generating O(2) and a proton gradient subsequently used for ATP formation. This Dioscorea elephantipes (Elephant's foot yam) protein is Photosystem II CP43 reaction center protein.